We begin with the raw amino-acid sequence, 268 residues long: Pantothenate synthetase (268 aa).

18 to 25 lines the ATP pocket; it reads MGYLHEGH. H25 serves as the catalytic Proton donor. Q49 serves as a coordination point for (R)-pantoate. Q49 contributes to the beta-alanine binding site. 135-138 contributes to the ATP binding site; sequence GQKD. Q141 provides a ligand contact to (R)-pantoate. ATP contacts are provided by residues I164 and 172 to 175; that span reads LSSR.

Belongs to the pantothenate synthetase family. In terms of assembly, homodimer.

It is found in the cytoplasm. It carries out the reaction (R)-pantoate + beta-alanine + ATP = (R)-pantothenate + AMP + diphosphate + H(+). Its pathway is cofactor biosynthesis; (R)-pantothenate biosynthesis; (R)-pantothenate from (R)-pantoate and beta-alanine: step 1/1. Functionally, catalyzes the condensation of pantoate with beta-alanine in an ATP-dependent reaction via a pantoyl-adenylate intermediate. The polypeptide is Pantothenate synthetase (Dehalococcoides mccartyi (strain CBDB1)).